The primary structure comprises 845 residues: MGFLSKIVDGNKKETKRLSKIADEVLSLEEDMAILTDEEIKNKTKQFQQEVQEIEDVKKQNDYLDKILPQAYALVREGAKRVFNMTPYKVQVMGGIAIHKGDIAEMRTGEGKTLTATMPTYLNALAGRGVHVITVNEYLSSVQSEEMAELYEFLGLTVGLNLNSKSTNEKREAYAQDITYSTNNELGFDYLRDNMVNYAEERVMRPLHFAIIDEVDSILIDEARTPLIISGEAEKSTSLYTQANVFAKMLKAEDDYKYDEKTKAVHLTEQGADKAERMFKIENLYDVQNVEVISHINTALKAHVTLQRDVDYMVVDGEVLIVDQFTGRTMPGRRFSEGLHQAIEAKEGVKIQNESKTMASITFQNYFRMYNKLAGMTGTAKTEEEEFRNIYNMTVTQIPTNKPVQRDDKSDLIYISQKGKFDAVVEDVVEKHKQGQPVLLGTVAVETSEYISNLLKKRGIRHDVLNAKNHEREAEIVANAGQKGAVTIATNMAGRGTDIKLGEGVEEIGGLAVIGTERHESRRIDDQLRGRSGRQGDRGDSRFYLSLQDELMVRFGSERLQKMMNRLGMDDSTPIESKMVSRAVESAQKRVEGNNFDARKRILEYDEVLRKQREIIYNERNNIIDSEDSSQLVNAMLRSTLQRGVTYHISEEDDNPDYAPFINYVNDVFLQEGDLKEEEINGKDSEDIFEVVWSKIEKVYESQKAKIGDQMAEFERMILLRSIDTHWTDHIDTMDQLRQGIHLRSYAQQNPLRDYQNEGHELFDMMMQNIEEDTSKFILKSVIQVDENIEREKTTDFGTAQHVSAEDGKEKAKKQPIVKGDKVGRNDPCPCGSGKKYKNCHGKEE.

Residues Q91, 109 to 113 (GEGKT), and D498 each bind ATP. Residues 795 to 845 (TDFGTAQHVSAEDGKEKAKKQPIVKGDKVGRNDPCPCGSGKKYKNCHGKEE) are disordered. Positions 829, 831, 840, and 841 each coordinate Zn(2+). Residues 835 to 845 (KKYKNCHGKEE) are compositionally biased toward basic residues.

Belongs to the SecA family. Monomer and homodimer. Part of the essential Sec protein translocation apparatus which comprises SecA, SecYEG and auxiliary proteins SecDF. Other proteins may also be involved. It depends on Zn(2+) as a cofactor.

It localises to the cell membrane. It is found in the cytoplasm. It catalyses the reaction ATP + H2O + cellular proteinSide 1 = ADP + phosphate + cellular proteinSide 2.. In terms of biological role, part of the Sec protein translocase complex. Interacts with the SecYEG preprotein conducting channel. Has a central role in coupling the hydrolysis of ATP to the transfer of proteins into and across the cell membrane, serving as an ATP-driven molecular motor driving the stepwise translocation of polypeptide chains across the membrane. This is Protein translocase subunit SecA 1 from Staphylococcus haemolyticus (strain JCSC1435).